The following is a 139-amino-acid chain: Ribosomal RNA large subunit methyltransferase H (139 aa).

S-adenosyl-L-methionine-binding positions include L57, G88, and 107 to 112 (LSAMTF).

The protein belongs to the RNA methyltransferase RlmH family. In terms of assembly, homodimer.

It localises to the cytoplasm. The enzyme catalyses pseudouridine(1915) in 23S rRNA + S-adenosyl-L-methionine = N(3)-methylpseudouridine(1915) in 23S rRNA + S-adenosyl-L-homocysteine + H(+). In terms of biological role, specifically methylates the pseudouridine at position 1915 (m3Psi1915) in 23S rRNA. This Solibacter usitatus (strain Ellin6076) protein is Ribosomal RNA large subunit methyltransferase H.